Consider the following 292-residue polypeptide: Ribosomal protein L11 methyltransferase (292 aa).

Residues T144, G165, D187, and N229 each contribute to the S-adenosyl-L-methionine site.

Belongs to the methyltransferase superfamily. PrmA family.

The protein localises to the cytoplasm. It carries out the reaction L-lysyl-[protein] + 3 S-adenosyl-L-methionine = N(6),N(6),N(6)-trimethyl-L-lysyl-[protein] + 3 S-adenosyl-L-homocysteine + 3 H(+). Functionally, methylates ribosomal protein L11. In Pseudomonas fluorescens (strain ATCC BAA-477 / NRRL B-23932 / Pf-5), this protein is Ribosomal protein L11 methyltransferase.